The primary structure comprises 125 residues: Fluoride-specific ion channel FluC (125 aa).

4 consecutive transmembrane segments (helical) span residues 5 to 25, 33 to 53, 66 to 86, and 100 to 120; these read IFLVGIGGGIGSVLRFVVSLL, IFPLTTFVVNLLGCFFVGILV, VKIFFITGFCGGFTTFSSFSL, and LVLYILINIIAGCAAVLLGYI. The Na(+) site is built by G76 and T79.

It belongs to the fluoride channel Fluc/FEX (TC 1.A.43) family.

It is found in the cell inner membrane. It catalyses the reaction fluoride(in) = fluoride(out). Its activity is regulated as follows. Na(+) is not transported, but it plays an essential structural role and its presence is essential for fluoride channel function. Its function is as follows. Fluoride-specific ion channel. Important for reducing fluoride concentration in the cell, thus reducing its toxicity. The polypeptide is Fluoride-specific ion channel FluC (Azobacteroides pseudotrichonymphae genomovar. CFP2).